A 130-amino-acid polypeptide reads, in one-letter code: uncharacterized protein (130 aa).

Asn102 carries an N-linked (GlcNAc...) asparagine glycan. A helical membrane pass occupies residues 110–130 (DPLAFYLMFLIIITILLIMIL).

It localises to the membrane. This is an uncharacterized protein from Dictyostelium discoideum (Social amoeba).